The sequence spans 754 residues: 1,4-alpha-glucan branching enzyme GlgB (754 aa).

Asp-431 functions as the Nucleophile in the catalytic mechanism. The active-site Proton donor is Glu-484.

This sequence belongs to the glycosyl hydrolase 13 family. GlgB subfamily. Monomer.

The catalysed reaction is Transfers a segment of a (1-&gt;4)-alpha-D-glucan chain to a primary hydroxy group in a similar glucan chain.. It functions in the pathway glycan biosynthesis; glycogen biosynthesis. Its function is as follows. Catalyzes the formation of the alpha-1,6-glucosidic linkages in glycogen by scission of a 1,4-alpha-linked oligosaccharide from growing alpha-1,4-glucan chains and the subsequent attachment of the oligosaccharide to the alpha-1,6 position. The chain is 1,4-alpha-glucan branching enzyme GlgB from Prochlorococcus marinus (strain MIT 9301).